The chain runs to 167 residues: Alpha-crystallin A chain (167 aa).

Met1 bears the N-acetylmethionine mark. The sHSP domain maps to Tyr47–Glu158. The Zn(2+) site is built by His94, Glu96, His101, and His148. The disordered stretch occupies residues Ser143–Ser167. The span at Ser147–Pro161 shows a compositional bias: basic and acidic residues. Residue Ser156 is glycosylated (O-linked (GlcNAc) serine).

It belongs to the small heat shock protein (HSP20) family. As to quaternary structure, heteropolymer composed of three CRYAA and one CRYAB subunits. Inter-subunit bridging via zinc ions enhances stability, which is crucial as there is no protein turn over in the lens. Can also form homodimers and homotetramers (dimers of dimers) which serve as the building blocks of homooligomers. Within homooligomers, the zinc-binding motif is created from residues of 3 different molecules. His-94 and Glu-96 from one molecule are ligands of the zinc ion, and His-101 and His-148 residues from additional molecules complete the site with tetrahedral coordination geometry.

Its subcellular location is the cytoplasm. The protein localises to the nucleus. Functionally, contributes to the transparency and refractive index of the lens. May act as a chaperone, preventing aggregation of various proteins under a wide range of stress conditions. The chain is Alpha-crystallin A chain (CRYAA) from Pelophylax lessonae (Pool frog).